A 372-amino-acid polypeptide reads, in one-letter code: Alanine dehydrogenase 2 (372 aa).

H95 is an active-site residue. 169–199 (KVTIIGGGQAGTNAAKIALGLGADVTILDVN) lines the NAD(+) pocket.

Belongs to the AlaDH/PNT family.

It carries out the reaction L-alanine + NAD(+) + H2O = pyruvate + NH4(+) + NADH + H(+). It functions in the pathway amino-acid degradation; L-alanine degradation via dehydrogenase pathway; NH(3) and pyruvate from L-alanine: step 1/1. Functionally, may play a role in cell wall synthesis as L-alanine is an important constituent of the peptidoglycan layer. The chain is Alanine dehydrogenase 2 (ald2) from Staphylococcus aureus (strain Mu50 / ATCC 700699).